The following is a 1232-amino-acid chain: Nitrate reductase alpha subunit (1232 aa).

The region spanning 53-117 (DKVVRSTHGV…SFSWYSYSPT (65 aa)) is the 4Fe-4S Mo/W bis-MGD-type domain. Positions 60, 64, 68, and 103 each coordinate [4Fe-4S] cluster. Mo-bis(molybdopterin guanine dinucleotide) is bound at residue Asp-233.

Belongs to the prokaryotic molybdopterin-containing oxidoreductase family. The cofactor is [4Fe-4S] cluster. Mo-bis(molybdopterin guanine dinucleotide) is required as a cofactor.

It is found in the cell membrane. It catalyses the reaction nitrate + a quinol = a quinone + nitrite + H2O. Its function is as follows. The alpha chain is the actual site of nitrate reduction. This chain is Nitrate reductase alpha subunit (narG), found in Mycobacterium tuberculosis (strain CDC 1551 / Oshkosh).